The following is a 515-amino-acid chain: Maturase K (515 aa).

The protein belongs to the intron maturase 2 family. MatK subfamily.

The protein resides in the plastid. The protein localises to the chloroplast. Its function is as follows. Usually encoded in the trnK tRNA gene intron. Probably assists in splicing its own and other chloroplast group II introns. The sequence is that of Maturase K from Picea pungens (Colorado spruce).